The chain runs to 255 residues: Aliphatic sulfonates import ATP-binding protein SsuB (255 aa).

In terms of domain architecture, ABC transporter spans 12 to 233 (LLLNAVSKHY…RLGSVRLAEL (222 aa)). 44–51 (GRSGGGKS) is a binding site for ATP.

Belongs to the ABC transporter superfamily. Aliphatic sulfonates importer (TC 3.A.1.17.2) family. As to quaternary structure, the complex is composed of two ATP-binding proteins (SsuB), two transmembrane proteins (SsuC) and a solute-binding protein (SsuA).

It localises to the cell inner membrane. The catalysed reaction is ATP + H2O + aliphatic sulfonate-[sulfonate-binding protein]Side 1 = ADP + phosphate + aliphatic sulfonateSide 2 + [sulfonate-binding protein]Side 1.. Part of the ABC transporter complex SsuABC involved in aliphatic sulfonates import. Responsible for energy coupling to the transport system. The sequence is that of Aliphatic sulfonates import ATP-binding protein SsuB from Shigella flexneri.